The sequence spans 2150 residues: A disintegrin and metalloproteinase with thrombospondin motifs gon-1 (2150 aa).

Residues 1–28 (MRSIGGSFHLLQPVVAALILLVVCLVYA) form the signal peptide. A propeptide spanning residues 29-273 (LQSGSGTISE…VIERKARSRR (245 aa)) is cleaved from the precursor. N-linked (GlcNAc...) asparagine glycosylation is found at Asn-134, Asn-213, Asn-243, and Asn-248. The region spanning 280-493 (HYVEVLVVAD…GQTQCLFDQP (214 aa)) is the Peptidase M12B domain. Cystine bridges form between Cys-402–Cys-488 and Cys-440–Cys-470. Position 424 (His-424) interacts with Zn(2+). The active site involves Glu-425. Residues His-428 and His-434 each coordinate Zn(2+). One can recognise a Disintegrin domain in the interval 503 to 587 (FVRDEPGKKY…RLAPESLTKI (85 aa)). The TSP type-1 1 domain occupies 588 to 643 (DGQWGDWRSWGECSRTCGGGVQKGLRDCDSPKPRNGGKYCVGQRERYRSCNTQECP). 3 cysteine pairs are disulfide-bonded: Cys-600/Cys-637, Cys-604/Cys-642, and Cys-615/Cys-627. An N-linked (GlcNAc...) asparagine glycan is attached at Asn-842. 11 consecutive TSP type-1 domains span residues 943-1003 (CSTR…IDCS), 1004-1057 (GRKW…RECN), 1060-1115 (PCPR…HACT), 1116-1165 (WWQF…KPCH), 1168-1227 (SCPK…GTCP), 1228-1277 (FWRN…QTCH), 1280-1339 (PCTS…DTCD), 1352-1409 (PPIR…RDCS), 1410-1469 (YWKM…EPCP), 1474-1524 (HIGS…ELCP), and 1527-1585 (TNNS…PPCR). N-linked (GlcNAc...) asparagine glycosylation is found at Asn-1139 and Asn-1199. Residues Asn-1370 and Asn-1432 are each glycosylated (N-linked (GlcNAc...) asparagine). Residues Asn-1528, Asn-1590, Asn-1606, and Asn-1654 are each glycosylated (N-linked (GlcNAc...) asparagine). Positions 1590–1614 (NKTSSASMTSLSSSNSNTTSSASAS) are disordered. Positions 1592–1614 (TSSASMTSLSSSNSNTTSSASAS) are enriched in low complexity. TSP type-1 domains follow at residues 1621-1675 (PVVS…VRCR), 1678-1736 (HCPR…VACP), 1737-1793 (AYRW…DTSN), 1794-1866 (CPYE…NPCD), and 1867-1924 (SEFK…RNCL). 6 disulfides stabilise this stretch: Cys-1679–Cys-1718, Cys-1690–Cys-1694, Cys-1690–Cys-1730, Cys-1694–Cys-1735, Cys-1705–Cys-1718, and Cys-1730–Cys-1735. 2 N-linked (GlcNAc...) asparagine glycosylation sites follow: Asn-1828 and Asn-1855. Residues 1924–2123 (LPSTCQELKS…RYKGLIFEVN (200 aa)) form the GON domain. Asn-1942, Asn-1960, and Asn-1997 each carry an N-linked (GlcNAc...) asparagine glycan.

Zn(2+) serves as cofactor. Expressed by the gonadal distal tip cells (DTCs). Expressed in muscles, including body wall, vulval and anal depressor muscles. Expressed in motor neurons and in ASI and ASJ neurons.

The protein localises to the secreted. It localises to the extracellular space. The protein resides in the extracellular matrix. Its subcellular location is the basement membrane. It is found in the endoplasmic reticulum. The protein localises to the golgi apparatus. Functionally, secreted metalloprotease required for distal tip cell (DTC) migration along the body wall basement membranes, a key step that promotes gonad morphogenesis. Probably acts by remodeling the basement membrane during cell migration. Required to restrict presynaptic growth at the neuromuscular junctions (NMJ) in late larval stage and in adult motor neurons, probably by controlling collagen IV emb-9 degradation, a component of the synapse basement membrane. Also involved in the organization of adult muscle morphology. Has a protease-independent function in promoting the transport from the endoplasmic reticulum to the Golgi apparatus of a variety of secretory cargos. Required for the secretion of insulin-like peptide ins-7, daf-28 and ins-18 and TGF beta-like protein daf-7. In peripheral tissues, negatively regulates insulin-mediated daf-16 translocation and thereby negatively regulates lifespan and dauer formation. This Caenorhabditis elegans protein is A disintegrin and metalloproteinase with thrombospondin motifs gon-1.